The sequence spans 237 residues: Probable septum site-determining protein MinC (237 aa).

Belongs to the MinC family. In terms of assembly, interacts with MinD and FtsZ.

Cell division inhibitor that blocks the formation of polar Z ring septums. Rapidly oscillates between the poles of the cell to destabilize FtsZ filaments that have formed before they mature into polar Z rings. Prevents FtsZ polymerization. The chain is Probable septum site-determining protein MinC from Buchnera aphidicola subsp. Acyrthosiphon pisum (strain 5A).